Here is a 1902-residue protein sequence, read N- to C-terminus: MQRKKKGLSILLAGTVALGALAVLPVGEIQAKAAISQQTKVSSLANTVKAATAKQAATDTTAATTNQAIATQLAAKGIDYNKLNKVQQQDTYVDVIVQMSAAPASENGTLRTDYSSTAEIQQETNKVIAAQASVKAAVEQVTQQTAGESYGYVVNGFSTKVRVVDIPKLKQIAGVKTVTLAKVYYPTDAKANSMANVQAVWSNYKYKGEGTVVSVIDTGIDPTHKDMRLSDDKDVKLTKYDVEKFTDTAKHGRYFTSKVPYGFNYADNNDTITDDTVDEQHGMHVAGIIGANGTGDDPTKSVVGVAPEAQLLAMKVFTNSDTSATTGSATLVSAIEDSAKIGADVLNMSLGSDSGNQTLEDPEIAAVQNANESGTAAVISAGNSGTSGSATQGVNKDYYGLQDNEMVGTPGTSRGATTVASAENTDVISQAVTITDGKDLQLGPETIQLSSNDFTGSFDQKKFYVVKDASGDLSKGAAADYTADAKGKIAIVKRGELNFADKQKYAQAAGAAGLIIVNNDGTATPLTSIRLTTTFPTFGLSSKTGQKLVDWVTAHPDDSLGVKIALTLLPNQKYTEDKMSDFTSYGPVSNLSFKPDITAPGGNIWSTQNNNGYTNMSGTSMASPFIAGSQALLKQALNNKNNPFYADYKQLKGTALTDFLKTVEMNTAQPINDINYNNVIVSPRRQGAGLVDVKAAIDALEKNPSTVVAENGYPAVELKDFTSTDKTFKLTFTNRTTHELTYQMDSNTDTNAVYTSATDPNSGVLYDKKIDGAAIKAGSDITVPAGKTAQIEFTLSLPKSFDQQQFVEGFLNFKGSDGSRLNLPYMGFFGDWNDGKIVDSLNGITYSPAGGNYGTVPLLTNKNTGHQYYGGMVTDADGKQTVDDQAIAFSSDKNALYNDISMQYYLLRNISNVQVDILDGQGNKVTTLSSSTNQTKTYYDAHSQKYIYYNAPAWDGTYYDQRDGNIKTADDGSYTYRISGVPEGGDKRQVFDVPFKLDSKAPTVRHVALSAKTENGKTQYYLTAEAKDDLSGLDATKSVKTAINEVTNLDATFTDAGTTADGYTKIETPLSDEQAQALGNGDNSAELYLTDNASNATNQDASVQKPGSTSFDLIVNGGGIPDKISSTTTGYEANTQGGGTYTFSGTYPAAVDGTYTDAQGKKHDLNTTYDAATNSFTASMAVTNADYAAQVDLYADKAHTQLLKHFDTKVRLTAPTFTDLKFNNGSDQTSEATIKVTGTVSSDTKTVNVGDTVAALDAQHHFSVDVPVNYGDNTIKVTATDEDGNTTTEQKTITSSYDPDVLKNAVTFDQGVKFGANEFNATSAKFYDPKTGIATITGKVKHPTTTLQVDGKQISIKNDLTFSFTLDLGTLGQKPFGVVVGDTTQNKTFQEALTFILDAVAPTLSLDSSTDAPVYTNDPNFQITGTATDNAQYLSLAINGSHVASQYADININSGKPGHMAIDQPVKLLEGKNVLTVAVTDSENNTTTKKITVYYEPKKTLAAPTVTPSTTEPAKTVTLTANAAATGETVQYSADGGKTYQDVPAAGVTVTANGTFKFKSTDLYGNESPAVDYVVTNIKADDPAQLQTAKQALTNLIASAKTLSASGKYDDATTTALAAATQKAQTALDQTDASVDSLTGANRDLQTAINQLAAKLPADKKTSLLNQLQSVKAALGTDLGNQTDPSTGKTFTAALDDLVAQAQAGTQTADQLQASLAKVLDAVLAKLAEGIKAATPAEVGNAKDAATGKTWYADIADTLTSGQASADASDKLAHLQALQSLKTKVAAAVEAAKTAGKGDDTTGTSDKGGGQGTPAPAPGDTGKDKGDEGSQPSSGGNIPTKPATTTSTSTDDTTDRNGQHTSGKGALPKTAETTERPAFGFLGVIVVSLMGVLGLKRKQREE.

An N-terminal signal peptide occupies residues M1–A33. The propeptide occupies A34–T187. The Peptidase S8 domain occupies A191 to I697. Active-site charge relay system residues include D217, H281, and S620. Positions K1793–S1805 are enriched in low complexity. The disordered stretch occupies residues K1793–E1872. Residues L1867–A1871 carry the LPXTG sorting signal motif. T1870 carries the pentaglycyl murein peptidoglycan amidated threonine modification. Positions A1871–E1902 are cleaved as a propeptide — removed by sortase.

The protein belongs to the peptidase S8 family.

Its subcellular location is the secreted. It localises to the cell wall. It catalyses the reaction Endopeptidase activity with very broad specificity, although some subsite preference have been noted, e.g. large hydrophobic residues in the P1 and P4 positions, and Pro in the P2 position. Best known for its action on caseins, although it has been shown to hydrolyze hemoglobin and oxidized insulin B-chain.. Its function is as follows. Protease which breaks down milk proteins during the growth of the bacteria on milk. The chain is PII-type proteinase (prtP) from Lacticaseibacillus paracasei (Lactobacillus paracasei).